Reading from the N-terminus, the 138-residue chain is DNA-directed RNA polymerase subunit omega (138 aa).

The disordered stretch occupies residues 101–138; that stretch reads AEDDDTLEADGLTIHDGADSDLDLSDDAGQDTDEADED. The segment covering 119–138 has biased composition (acidic residues); the sequence is DSDLDLSDDAGQDTDEADED.

It belongs to the RNA polymerase subunit omega family. The RNAP catalytic core consists of 2 alpha, 1 beta, 1 beta' and 1 omega subunit. When a sigma factor is associated with the core the holoenzyme is formed, which can initiate transcription.

It carries out the reaction RNA(n) + a ribonucleoside 5'-triphosphate = RNA(n+1) + diphosphate. Its function is as follows. Promotes RNA polymerase assembly. Latches the N- and C-terminal regions of the beta' subunit thereby facilitating its interaction with the beta and alpha subunits. This is DNA-directed RNA polymerase subunit omega from Rhodospirillum rubrum (strain ATCC 11170 / ATH 1.1.1 / DSM 467 / LMG 4362 / NCIMB 8255 / S1).